The primary structure comprises 128 residues: Large ribosomal subunit protein bL17 (128 aa).

Belongs to the bacterial ribosomal protein bL17 family. In terms of assembly, part of the 50S ribosomal subunit. Contacts protein L32.

This chain is Large ribosomal subunit protein bL17, found in Pseudomonas syringae pv. tomato (strain ATCC BAA-871 / DC3000).